The following is a 219-amino-acid chain: Ribose-5-phosphate isomerase A (219 aa).

Residues 28 to 31, 81 to 84, and 94 to 97 each bind substrate; these read TGST, DGAD, and KGGG. Glutamate 103 acts as the Proton acceptor in catalysis. A substrate-binding site is contributed by lysine 121.

This sequence belongs to the ribose 5-phosphate isomerase family. In terms of assembly, homodimer.

It carries out the reaction aldehydo-D-ribose 5-phosphate = D-ribulose 5-phosphate. It functions in the pathway carbohydrate degradation; pentose phosphate pathway; D-ribose 5-phosphate from D-ribulose 5-phosphate (non-oxidative stage): step 1/1. In terms of biological role, catalyzes the reversible conversion of ribose-5-phosphate to ribulose 5-phosphate. This is Ribose-5-phosphate isomerase A from Salmonella choleraesuis (strain SC-B67).